The following is a 392-amino-acid chain: Selenide, water dikinase 1 (392 aa).

The active site involves cysteine 31. ATP is bound by residues lysine 32, glycine 67–aspartate 69, aspartate 87, aspartate 110, and glycine 161–threonine 164. Residue aspartate 69 participates in Mg(2+) binding. Aspartate 110 contributes to the Mg(2+) binding site. Residue aspartate 265 coordinates Mg(2+).

Belongs to the selenophosphate synthase 1 family. Class II subfamily. As to quaternary structure, homodimer. It depends on Mg(2+) as a cofactor.

The protein resides in the cell membrane. It localises to the nucleus membrane. The catalysed reaction is hydrogenselenide + ATP + H2O = selenophosphate + AMP + phosphate + 2 H(+). In terms of biological role, synthesizes selenophosphate from selenide and ATP. In Xenopus tropicalis (Western clawed frog), this protein is Selenide, water dikinase 1 (sephs1).